The following is a 235-amino-acid chain: Glycerol uptake facilitator protein 2 (235 aa).

A run of 6 helical transmembrane segments spans residues 4–24, 39–59, 62–82, 83–103, 134–154, and 165–185; these read FLGEFLGTMVLIVFGVGSGAA, FICLAWGLAVTFGVYVAGQFG, GHLNPAVTVGFALFGYLPMAN, VWPYLLGQFLGAFIGAVIVII, VFNFLSETIATFFFIFVLLNL, and MVGLLIVVVGQTLGGTTGFAI. The short motif at 65–67 is the NPA 1 element; it reads NPA. Positions 186–188 match the NPA 2 motif; it reads NPA. Residues 210–230 form a helical membrane-spanning segment; the sequence is WGYAWVPMFGPLLGGILAAGL.

This sequence belongs to the MIP/aquaporin (TC 1.A.8) family.

The protein resides in the cell membrane. In terms of biological role, transporter that facilitates the transmembrane diffusion of water, dihydroxyacetone, glycerol and H(2)O(2). Is not permeable to urea and D/L-lactic acid. In Lactiplantibacillus plantarum (strain ATCC BAA-793 / NCIMB 8826 / WCFS1) (Lactobacillus plantarum), this protein is Glycerol uptake facilitator protein 2.